The following is a 565-amino-acid chain: Urocanate hydratase (565 aa).

NAD(+) contacts are provided by residues 61-62 (GG), Gln-139, 185-187 (GMG), Glu-205, Arg-210, 251-252 (NA), 272-276 (QTSAH), 282-283 (YL), and Tyr-331. Residue Cys-419 is part of the active site. The segment at 453-472 (LDSGSVASPNRETESMRDGS) is disordered. Basic and acidic residues predominate over residues 463–472 (RETESMRDGS). Residue Gly-501 participates in NAD(+) binding.

It belongs to the urocanase family. The cofactor is NAD(+).

Its subcellular location is the cytoplasm. It catalyses the reaction 4-imidazolone-5-propanoate = trans-urocanate + H2O. It functions in the pathway amino-acid degradation; L-histidine degradation into L-glutamate; N-formimidoyl-L-glutamate from L-histidine: step 2/3. Catalyzes the conversion of urocanate to 4-imidazolone-5-propionate. The sequence is that of Urocanate hydratase from Pseudomonas syringae pv. syringae (strain B728a).